The primary structure comprises 236 residues: HTH-type transcriptional regulator SACE_5812 (236 aa).

Residues leucine 30 to valine 90 enclose the HTH tetR-type domain. Residues serine 53–valine 72 constitute a DNA-binding region (H-T-H motif).

Its function is as follows. Transcriptional regulator that inhibits erythromycin production. Directly represses the expression of SACE_5813, eryAI (encoding polyketide synthase I) and ermE (encoding rRNA methyltransferase), suggesting its direct regulation of the erythromycin biosynthesis gene cluster. May play an important role in regulating secondary metabolism in actinomycetes. The sequence is that of HTH-type transcriptional regulator SACE_5812 from Saccharopolyspora erythraea (strain ATCC 11635 / DSM 40517 / JCM 4748 / NBRC 13426 / NCIMB 8594 / NRRL 2338).